Reading from the N-terminus, the 251-residue chain is Retinoic acid early-inducible protein 1-epsilon (251 aa).

A signal peptide spans Met1–Gly28. A disulfide bond links Cys37 and Cys56. N-linked (GlcNAc...) asparagine glycans are attached at residues Asn38, Asn70, Asn83, Asn141, and Asn154. Cys88 and Cys188 form a disulfide bridge. A disordered region spans residues Leu196–Thr228. Positions Ser209 to Ser219 are enriched in low complexity. Ser225 carries GPI-anchor amidated serine lipidation. Positions His226 to Met251 are cleaved as a propeptide — removed in mature form.

It belongs to the NKG2D ligand family. Glycosylated.

Its subcellular location is the cell membrane. Acts as a ligand for KLRK1. The sequence is that of Retinoic acid early-inducible protein 1-epsilon (Raet1e) from Mus musculus (Mouse).